The following is a 390-amino-acid chain: Succinate--CoA ligase [ADP-forming] subunit beta (390 aa).

One can recognise an ATP-grasp domain in the interval 9–245 (KELLSRYGLP…KSQENEREVK (237 aa)). Residues K46, 53-55 (GRG), E100, Y103, and E108 contribute to the ATP site. Mg(2+) is bound by residues N200 and D214. Substrate-binding positions include N265 and 322 to 324 (GIV).

The protein belongs to the succinate/malate CoA ligase beta subunit family. Heterotetramer of two alpha and two beta subunits. Requires Mg(2+) as cofactor.

The catalysed reaction is succinate + ATP + CoA = succinyl-CoA + ADP + phosphate. It carries out the reaction GTP + succinate + CoA = succinyl-CoA + GDP + phosphate. It participates in carbohydrate metabolism; tricarboxylic acid cycle; succinate from succinyl-CoA (ligase route): step 1/1. Succinyl-CoA synthetase functions in the citric acid cycle (TCA), coupling the hydrolysis of succinyl-CoA to the synthesis of either ATP or GTP and thus represents the only step of substrate-level phosphorylation in the TCA. The beta subunit provides nucleotide specificity of the enzyme and binds the substrate succinate, while the binding sites for coenzyme A and phosphate are found in the alpha subunit. The sequence is that of Succinate--CoA ligase [ADP-forming] subunit beta from Chromobacterium violaceum (strain ATCC 12472 / DSM 30191 / JCM 1249 / CCUG 213 / NBRC 12614 / NCIMB 9131 / NCTC 9757 / MK).